The primary structure comprises 369 residues: Glutamate 5-kinase (369 aa).

Lysine 14 is an ATP binding site. Substrate-binding residues include serine 56, aspartate 143, and asparagine 155. ATP is bound by residues 175–176 (SD) and 215–221 (TGGMASK). The region spanning 277 to 351 (AGKIRLDDGA…GMQTQDLPDG (75 aa)) is the PUA domain.

This sequence belongs to the glutamate 5-kinase family.

The protein localises to the cytoplasm. It carries out the reaction L-glutamate + ATP = L-glutamyl 5-phosphate + ADP. It participates in amino-acid biosynthesis; L-proline biosynthesis; L-glutamate 5-semialdehyde from L-glutamate: step 1/2. Its function is as follows. Catalyzes the transfer of a phosphate group to glutamate to form L-glutamate 5-phosphate. The chain is Glutamate 5-kinase from Corynebacterium glutamicum (strain ATCC 13032 / DSM 20300 / JCM 1318 / BCRC 11384 / CCUG 27702 / LMG 3730 / NBRC 12168 / NCIMB 10025 / NRRL B-2784 / 534).